A 328-amino-acid chain; its full sequence is Phosphate acyltransferase (328 aa).

It belongs to the PlsX family. As to quaternary structure, homodimer. Probably interacts with PlsY.

It localises to the cytoplasm. The catalysed reaction is a fatty acyl-[ACP] + phosphate = an acyl phosphate + holo-[ACP]. The protein operates within lipid metabolism; phospholipid metabolism. Its function is as follows. Catalyzes the reversible formation of acyl-phosphate (acyl-PO(4)) from acyl-[acyl-carrier-protein] (acyl-ACP). This enzyme utilizes acyl-ACP as fatty acyl donor, but not acyl-CoA. This chain is Phosphate acyltransferase, found in Campylobacter jejuni subsp. jejuni serotype O:23/36 (strain 81-176).